The chain runs to 197 residues: Small ribosomal subunit protein uS4B (197 aa).

In terms of domain architecture, S4 RNA-binding spans 88–151 (CRLDNIAYRI…RKNDEFADNF (64 aa)).

This sequence belongs to the universal ribosomal protein uS4 family. In terms of assembly, part of the 30S ribosomal subunit. Contacts protein S5. The interaction surface between S4 and S5 is involved in control of translational fidelity.

One of the primary rRNA binding proteins, it binds directly to 16S rRNA where it nucleates assembly of the body of the 30S subunit. Functionally, with S5 and S12 plays an important role in translational accuracy. This is Small ribosomal subunit protein uS4B from Clostridium botulinum (strain Hall / ATCC 3502 / NCTC 13319 / Type A).